Reading from the N-terminus, the 778-residue chain is Glutathione biosynthesis bifunctional protein GshAB (778 aa).

The interval methionine 1–valine 354 is glutamate--cysteine ligase. Residues lysine 521 to phenylalanine 777 form the ATP-grasp domain. Arginine 548–arginine 606 is an ATP binding site. Mg(2+)-binding residues include aspartate 728, glutamate 747, and asparagine 749. Positions 728, 747, and 749 each coordinate Mn(2+).

It in the N-terminal section; belongs to the glutamate--cysteine ligase type 1 family. Type 2 subfamily. Monomer. Mg(2+) serves as cofactor. The cofactor is Mn(2+).

The enzyme catalyses L-cysteine + L-glutamate + ATP = gamma-L-glutamyl-L-cysteine + ADP + phosphate + H(+). It carries out the reaction gamma-L-glutamyl-L-cysteine + glycine + ATP = glutathione + ADP + phosphate + H(+). It participates in sulfur metabolism; glutathione biosynthesis; glutathione from L-cysteine and L-glutamate: step 1/2. It functions in the pathway sulfur metabolism; glutathione biosynthesis; glutathione from L-cysteine and L-glutamate: step 2/2. Its function is as follows. Synthesizes glutathione from L-glutamate and L-cysteine via gamma-L-glutamyl-L-cysteine. This chain is Glutathione biosynthesis bifunctional protein GshAB, found in Clostridium perfringens (strain 13 / Type A).